Reading from the N-terminus, the 537-residue chain is Glucans biosynthesis protein D (537 aa).

Positions 1 to 30 (MLMYRRDFLKSVTAAWVAFGLPNPLGGAFA) form a signal peptide, tat-type signal.

It belongs to the OpgD/OpgG family. In terms of processing, predicted to be exported by the Tat system. The position of the signal peptide cleavage has not been experimentally proven.

It is found in the periplasm. The protein operates within glycan metabolism; osmoregulated periplasmic glucan (OPG) biosynthesis. Probably involved in the control of the structural glucose backbone of osmoregulated periplasmic glucans (OPGs). This Xylella fastidiosa (strain M12) protein is Glucans biosynthesis protein D.